Here is a 338-residue protein sequence, read N- to C-terminus: DNA-directed RNA polymerase subunit alpha (338 aa).

An alpha N-terminal domain (alpha-NTD) region spans residues 1–234 (MIHKNWAELI…DQLSIFVNFE (234 aa)). The alpha C-terminal domain (alpha-CTD) stretch occupies residues 250–338 (FNPLLLKKVD…DLAKRFEDQF (89 aa)).

Belongs to the RNA polymerase alpha chain family. As to quaternary structure, homodimer. The RNAP catalytic core consists of 2 alpha, 1 beta, 1 beta' and 1 omega subunit. When a sigma factor is associated with the core the holoenzyme is formed, which can initiate transcription.

It carries out the reaction RNA(n) + a ribonucleoside 5'-triphosphate = RNA(n+1) + diphosphate. Its function is as follows. DNA-dependent RNA polymerase catalyzes the transcription of DNA into RNA using the four ribonucleoside triphosphates as substrates. The polypeptide is DNA-directed RNA polymerase subunit alpha (Cereibacter sphaeroides (strain ATCC 17025 / ATH 2.4.3) (Rhodobacter sphaeroides)).